The following is a 756-amino-acid chain: 5-methyltetrahydropteroyltriglutamate--homocysteine methyltransferase (756 aa).

5-methyltetrahydropteroyltri-L-glutamate is bound by residues 16–19 (RELK) and Lys-116. Residues 433–435 (IGS) and Glu-486 each bind L-homocysteine. Residues 433–435 (IGS) and Glu-486 contribute to the L-methionine site. 5-methyltetrahydropteroyltri-L-glutamate-binding positions include 517–518 (RC) and Trp-563. Asp-601 provides a ligand contact to L-homocysteine. Asp-601 contacts L-methionine. 5-methyltetrahydropteroyltri-L-glutamate is bound at residue Glu-607. Residues His-643, Cys-645, and Glu-667 each contribute to the Zn(2+) site. His-696 acts as the Proton donor in catalysis. Cys-728 provides a ligand contact to Zn(2+).

This sequence belongs to the vitamin-B12 independent methionine synthase family. The cofactor is Zn(2+).

The enzyme catalyses 5-methyltetrahydropteroyltri-L-glutamate + L-homocysteine = tetrahydropteroyltri-L-glutamate + L-methionine. It participates in amino-acid biosynthesis; L-methionine biosynthesis via de novo pathway; L-methionine from L-homocysteine (MetE route): step 1/1. Its function is as follows. Catalyzes the transfer of a methyl group from 5-methyltetrahydrofolate to homocysteine resulting in methionine formation. This is 5-methyltetrahydropteroyltriglutamate--homocysteine methyltransferase from Buchnera aphidicola subsp. Baizongia pistaciae (strain Bp).